The primary structure comprises 202 residues: Ribosome biogenesis regulatory protein homolog (202 aa).

The tract at residues 82–103 is disordered; the sequence is TLPPPTTPLPREKPVPQPKPET.

It belongs to the RRS1 family. In terms of assembly, component of a hexameric 5S RNP precursor complex, composed of 5S RNA, RRS1, RPF2, RPL5, RPL11 and SYO1; this complex acts as a precursor for ribosome assembly.

The protein localises to the nucleus. Functionally, involved in ribosomal large subunit assembly. The protein is Ribosome biogenesis regulatory protein homolog of Chaetomium thermophilum (strain DSM 1495 / CBS 144.50 / IMI 039719) (Thermochaetoides thermophila).